Reading from the N-terminus, the 303-residue chain is UDP-N-acetylenolpyruvoylglucosamine reductase (303 aa).

One can recognise an FAD-binding PCMH-type domain in the interval 29 to 196; sequence KIGGPADVLV…LEAVLQLEQK (168 aa). The active site involves R174. The active-site Proton donor is S225. The active site involves E295.

This sequence belongs to the MurB family. FAD is required as a cofactor.

The protein resides in the cytoplasm. It carries out the reaction UDP-N-acetyl-alpha-D-muramate + NADP(+) = UDP-N-acetyl-3-O-(1-carboxyvinyl)-alpha-D-glucosamine + NADPH + H(+). Its pathway is cell wall biogenesis; peptidoglycan biosynthesis. Functionally, cell wall formation. The polypeptide is UDP-N-acetylenolpyruvoylglucosamine reductase (Bacillus licheniformis (strain ATCC 14580 / DSM 13 / JCM 2505 / CCUG 7422 / NBRC 12200 / NCIMB 9375 / NCTC 10341 / NRRL NRS-1264 / Gibson 46)).